The primary structure comprises 131 residues: MAGIKALISLSFGGAIGLMFLMLGCALPIYNQYWPLFVLFFYILSPIPYCIARRLVDDTDAMSNACKELAIFLTTGVVVSAFGLPVVFARAHLIEWGACALVLTGNTVIFATILGFFLVFGSNDDFSWQQW.

Transmembrane regions (helical) follow at residues 7-27 (LISLSFGGAIGLMFLMLGCAL), 32-52 (QYWPLFVLFFYILSPIPYCIA), 69-89 (LAIFLTTGVVVSAFGLPVVFA), and 100-120 (ALVLTGNTVIFATILGFFLVF).

Belongs to the OB-RGRP/VPS55 family. Interacts with RAB13.

The protein resides in the membrane. In terms of biological role, negatively regulates growth hormone (GH) receptor cell surface expression in liver. May play a role in liver resistance to GH during periods of reduced nutrient availability. This Rattus norvegicus (Rat) protein is Leptin receptor overlapping transcript-like 1 (Leprotl1).